The chain runs to 132 residues: MSSVSASWLDEVKWDDKGLVTAIAQDAASGRVLMVAWMNRESLQLTADTGIAHYWSRSRRKLWKKGEESGHLQTVRELRLDCDGDVIVMQIEQIGGIACHTGRESCFYRRFENGGWTTVDAVLKDPRAIYHP.

Mg(2+) is bound at residue aspartate 81. Position 82 (cysteine 82) interacts with Zn(2+). Positions 83 and 85 each coordinate Mg(2+). Residues cysteine 99 and cysteine 106 each coordinate Zn(2+).

Belongs to the PRA-CH family. In terms of assembly, homodimer. Mg(2+) is required as a cofactor. Zn(2+) serves as cofactor.

It is found in the cytoplasm. It catalyses the reaction 1-(5-phospho-beta-D-ribosyl)-5'-AMP + H2O = 1-(5-phospho-beta-D-ribosyl)-5-[(5-phospho-beta-D-ribosylamino)methylideneamino]imidazole-4-carboxamide. It functions in the pathway amino-acid biosynthesis; L-histidine biosynthesis; L-histidine from 5-phospho-alpha-D-ribose 1-diphosphate: step 3/9. In terms of biological role, catalyzes the hydrolysis of the adenine ring of phosphoribosyl-AMP. The chain is Phosphoribosyl-AMP cyclohydrolase from Chromobacterium violaceum (strain ATCC 12472 / DSM 30191 / JCM 1249 / CCUG 213 / NBRC 12614 / NCIMB 9131 / NCTC 9757 / MK).